The sequence spans 396 residues: NDP-glycosyltransferase YjiC (396 aa).

UDP contacts are provided by residues Asn-18, Thr-234, Val-283, His-298, and 302-306; that span reads NSTME.

Belongs to the UDP-glycosyltransferase family.

The catalysed reaction is an NDP-glycose + an acceptor = a glycosylated acceptor + NDP.. Its function is as follows. Glycosyltransferase that can glycosylate a wide range of substrates, including various flavonoids (flavones, flavonols, flavanones, flavanols, chalcones), isoflavonoids and stilbenes, to produce multiple glycosylated products. It can accept diverse nucleotide diphosphate-D/L-sugars as donors, including ADP-, GDP-, CDP-, TDP- or UDP-alpha-D-glucose, and catalyzes O-, N-, or S-glycosylation. In vitro, catalyzes the glycosylation of, among others, apigenin, 3-hydroxyflavone, phloretin or resveratrol, resulting in multiple glucosylated products, along with mono-, di-, tri- and tetraglucosides. Can also catalyze the glycosylation of the macrolide epothilone A with diverse NDP-D/L-sugars, forming different epothilone A glycoside derivatives. The protein is NDP-glycosyltransferase YjiC of Bacillus licheniformis (strain ATCC 14580 / DSM 13 / JCM 2505 / CCUG 7422 / NBRC 12200 / NCIMB 9375 / NCTC 10341 / NRRL NRS-1264 / Gibson 46).